The primary structure comprises 346 residues: Holliday junction branch migration complex subunit RuvB (346 aa).

The tract at residues 1 to 182 (MSERLVTSNE…LGVLCSMEYY (182 aa)) is large ATPase domain (RuvB-L). Residues Leu21, Arg22, Gly63, Lys66, Thr67, Thr68, 129–131 (EDY), Arg172, Tyr182, and Arg219 each bind ATP. A Mg(2+)-binding site is contributed by Thr67. Residues 183–253 (TDEQLKEIII…AAKKSLEILE (71 aa)) are small ATPAse domain (RuvB-S). The tract at residues 256–346 (GEGFDRIDNK…DSKQCTLFEK (91 aa)) is head domain (RuvB-H). DNA contacts are provided by Arg311 and Arg316.

Belongs to the RuvB family. As to quaternary structure, homohexamer. Forms an RuvA(8)-RuvB(12)-Holliday junction (HJ) complex. HJ DNA is sandwiched between 2 RuvA tetramers; dsDNA enters through RuvA and exits via RuvB. An RuvB hexamer assembles on each DNA strand where it exits the tetramer. Each RuvB hexamer is contacted by two RuvA subunits (via domain III) on 2 adjacent RuvB subunits; this complex drives branch migration. In the full resolvosome a probable DNA-RuvA(4)-RuvB(12)-RuvC(2) complex forms which resolves the HJ.

The protein resides in the cytoplasm. It catalyses the reaction ATP + H2O = ADP + phosphate + H(+). The RuvA-RuvB-RuvC complex processes Holliday junction (HJ) DNA during genetic recombination and DNA repair, while the RuvA-RuvB complex plays an important role in the rescue of blocked DNA replication forks via replication fork reversal (RFR). RuvA specifically binds to HJ cruciform DNA, conferring on it an open structure. The RuvB hexamer acts as an ATP-dependent pump, pulling dsDNA into and through the RuvAB complex. RuvB forms 2 homohexamers on either side of HJ DNA bound by 1 or 2 RuvA tetramers; 4 subunits per hexamer contact DNA at a time. Coordinated motions by a converter formed by DNA-disengaged RuvB subunits stimulates ATP hydrolysis and nucleotide exchange. Immobilization of the converter enables RuvB to convert the ATP-contained energy into a lever motion, pulling 2 nucleotides of DNA out of the RuvA tetramer per ATP hydrolyzed, thus driving DNA branch migration. The RuvB motors rotate together with the DNA substrate, which together with the progressing nucleotide cycle form the mechanistic basis for DNA recombination by continuous HJ branch migration. Branch migration allows RuvC to scan DNA until it finds its consensus sequence, where it cleaves and resolves cruciform DNA. The polypeptide is Holliday junction branch migration complex subunit RuvB (Clostridium perfringens (strain 13 / Type A)).